A 365-amino-acid polypeptide reads, in one-letter code: MSLARLRVHHLRNLESVDIEPSSRVNLIYGLNGSGKTSLLEAINVLALGRSFRSHKHKPLISHQQLAFTIFGRVLADDAAEIPIGIQRNQQGEVMLKANGANVGSIADLAIFLPVQVINSDTFLLLEGSPKVRRQFMDWLVFHVEHQFYPQWKSLQRCLKHRNSLLRRDRIDPFELSTWDQELVQLTEQIHCFREQCMALFVPVFEQLLQEFVVLEGLELHYQRGWDKHKDYAQVLQDSFERDKRLGVTHAGSHRAELRITLNGQDAAEILSRGQQKLLVCALKIAQGLVFSQVTGRKCIYLVDDLPAELDEQHRQRLVDWLYRMDTQVFITGVERQALLAGWLDKPEITPKMFHVEHGRVSCPA.

An ATP-binding site is contributed by 30–37 (GLNGSGKT).

It belongs to the RecF family.

The protein resides in the cytoplasm. In terms of biological role, the RecF protein is involved in DNA metabolism; it is required for DNA replication and normal SOS inducibility. RecF binds preferentially to single-stranded, linear DNA. It also seems to bind ATP. The chain is DNA replication and repair protein RecF from Cellvibrio japonicus (strain Ueda107) (Pseudomonas fluorescens subsp. cellulosa).